We begin with the raw amino-acid sequence, 150 residues long: Transcriptional repressor NrdR (150 aa).

Positions 1 to 26 are disordered; the sequence is MKCPFCGNSDSKVVDSRPDKGGSGIR. A zinc finger lies at 3–34; it reads CPFCGNSDSKVVDSRPDKGGSGIRRRRECEQC. Residues 49 to 139 enclose the ATP-cone domain; it reads PLVLKKDGRR…VYRSFRDINE (91 aa).

It belongs to the NrdR family. Zn(2+) is required as a cofactor.

Negatively regulates transcription of bacterial ribonucleotide reductase nrd genes and operons by binding to NrdR-boxes. In Pelobacter propionicus (strain DSM 2379 / NBRC 103807 / OttBd1), this protein is Transcriptional repressor NrdR.